Consider the following 218-residue polypeptide: Protein-L-isoaspartate O-methyltransferase (218 aa).

Residue S52 is part of the active site.

It belongs to the methyltransferase superfamily. L-isoaspartyl/D-aspartyl protein methyltransferase family.

The protein resides in the cytoplasm. It carries out the reaction [protein]-L-isoaspartate + S-adenosyl-L-methionine = [protein]-L-isoaspartate alpha-methyl ester + S-adenosyl-L-homocysteine. In terms of biological role, catalyzes the methyl esterification of L-isoaspartyl residues in peptides and proteins that result from spontaneous decomposition of normal L-aspartyl and L-asparaginyl residues. It plays a role in the repair and/or degradation of damaged proteins. This chain is Protein-L-isoaspartate O-methyltransferase, found in Rhodopseudomonas palustris (strain ATCC BAA-98 / CGA009).